Consider the following 300-residue polypeptide: Protein Bel-1 (300 aa).

A disordered region spans residues 1-50 (MDSYEKEESVASTSGIQDLQTLSELVGPENAGEGELTIAEEPEENPRRPR). The segment covering 10–23 (VASTSGIQDLQTLS) has biased composition (polar residues). The DNA-binding element occupies 89 to 200 (SKSLCKRLIL…SEGPKPRPRH (112 aa)). The tract at residues 209–244 (FEKHHKPRQKRPRRRSIDNESCASSSDTMANEPGSL) is disordered. The segment covering 211-222 (KHHKPRQKRPRR) has biased composition (basic residues). Residues 214–223 (KPRQKRPRRR) carry the Nuclear localization signal motif. The transactivation domain stretch occupies residues 224-300 (SIDNESCASS…PSGSGEHSVL (77 aa)). The segment covering 227-237 (NESCASSSDTM) has biased composition (polar residues).

As to quaternary structure, homodimer or homomultimer. Forms complexes with the host nuclear factors NFIA, NFIB, NFIC or NFIX.

Its subcellular location is the host nucleus. Functionally, transcriptional transactivator that activates the viral internal promoter (IP), thereby enhancing its own expression. This transactivation is repressed by nuclear factor I. Also transactivates the long terminal repeat (LTR) promoter, thereby inducing structural gene expression, initiating the late phase of infection. It is therefore a key regulator of viral gene expression. It directly binds to and activates DNA target sites of viral promoters and those of distinct cellular genes. Required for viral replication. The chain is Protein Bel-1 (bel1) from Human spumaretrovirus (SFVcpz(hu)).